The sequence spans 279 residues: MKIISCIEELRDHLRGQLRTAFVPTMGNLHDGHLSLMRLARKHGDPVVASIFVNRLQFGPNEDFDKYPRTFQADVEKLEKEGVYILFAPTEKDLYPEPQEFRVRPPDDLGNTLEGEFRPGFFSGVTTVVLKLFSCVQPSVAVFGKKDYQQLMIVRNMSKQFALPTEIIAADTYRAEDGLALSSRNVYLSPAERAEAPALFQSLNSVANEVRSGHLDIFELERKAMADLSQRGWKPDYISIRKQSNLQPPSAGDMAQGEKLVVLAAAKLGVTRLIDNLEI.

26-33 lines the ATP pocket; it reads MGNLHDGH. Catalysis depends on H33, which acts as the Proton donor. Q57 is a (R)-pantoate binding site. A beta-alanine-binding site is contributed by Q57. Position 144 to 147 (144 to 147) interacts with ATP; sequence GKKD. Q150 contacts (R)-pantoate. Residue 181-184 coordinates ATP; the sequence is LSSR.

Belongs to the pantothenate synthetase family. As to quaternary structure, homodimer.

It localises to the cytoplasm. It carries out the reaction (R)-pantoate + beta-alanine + ATP = (R)-pantothenate + AMP + diphosphate + H(+). It functions in the pathway cofactor biosynthesis; (R)-pantothenate biosynthesis; (R)-pantothenate from (R)-pantoate and beta-alanine: step 1/1. Its function is as follows. Catalyzes the condensation of pantoate with beta-alanine in an ATP-dependent reaction via a pantoyl-adenylate intermediate. The protein is Pantothenate synthetase of Janthinobacterium sp. (strain Marseille) (Minibacterium massiliensis).